The chain runs to 253 residues: tRNA-cytidine(32) 2-sulfurtransferase 2 (253 aa).

Residues 33 to 38 (SGGKDS) carry the PP-loop motif motif. [4Fe-4S] cluster-binding residues include Cys-108, Cys-111, and Cys-199.

The protein belongs to the TtcA family. Homodimer. Mg(2+) is required as a cofactor. The cofactor is [4Fe-4S] cluster.

Its subcellular location is the cytoplasm. The enzyme catalyses cytidine(32) in tRNA + S-sulfanyl-L-cysteinyl-[cysteine desulfurase] + AH2 + ATP = 2-thiocytidine(32) in tRNA + L-cysteinyl-[cysteine desulfurase] + A + AMP + diphosphate + H(+). The protein operates within tRNA modification. Its function is as follows. Catalyzes the ATP-dependent 2-thiolation of cytidine in position 32 of tRNA, to form 2-thiocytidine (s(2)C32). The sulfur atoms are provided by the cysteine/cysteine desulfurase (IscS) system. In Francisella tularensis subsp. novicida (strain U112), this protein is tRNA-cytidine(32) 2-sulfurtransferase 2.